Consider the following 255-residue polypeptide: MKFEAIAVENIPLIHTGDDLPSIICKNLELQDRDIVIVASTIVAKAEGKVFRLEDITPGKVALEMASRNGKDARFIQAVLSLSREVLVEKPFMLVTTLAGHTCVNAGIDESNIEDGFLLYPPENSDASASRLGQELETLSGKKLSVIVTDTNGRAFKIGQTGAAIGIYKIKPVKHWIGEKDLFGKVLEVAEEAIADELAGAANLLMGEGAGGTPVVVIRGFDYYCEEETFIKEMYRPEEMDVIKKGLRCLQKRVE.

GTP contacts are provided by residues 11–14 (IPLI), 40–41 (ST), and Lys45. An a divalent metal cation-binding site is contributed by Asp109. Asn112 contributes to the GTP binding site. Residues Asp150, Thr151, and Glu208 each coordinate a divalent metal cation. 206–213 (MGEGAGGT) provides a ligand contact to GTP.

The protein belongs to the CofE family. In terms of assembly, homodimer. The cofactor is Mg(2+). It depends on Mn(2+) as a cofactor. K(+) serves as cofactor.

The enzyme catalyses oxidized coenzyme F420-0 + GTP + L-glutamate = oxidized coenzyme F420-1 + GDP + phosphate + H(+). It catalyses the reaction oxidized coenzyme F420-1 + GTP + L-glutamate = oxidized coenzyme F420-2 + GDP + phosphate + H(+). It participates in cofactor biosynthesis; coenzyme F420 biosynthesis. In terms of biological role, catalyzes the GTP-dependent successive addition of two or more gamma-linked L-glutamates to the L-lactyl phosphodiester of 7,8-didemethyl-8-hydroxy-5-deazariboflavin (F420-0) to form coenzyme F420-0-glutamyl-glutamate (F420-2) or polyglutamated F420 derivatives. The sequence is that of Coenzyme F420:L-glutamate ligase from Methanosarcina barkeri (strain Fusaro / DSM 804).